A 428-amino-acid polypeptide reads, in one-letter code: Leucine-rich repeat-containing protein 42 (428 aa).

LRR repeat units follow at residues 149–170 (VLCS…EEIK), 174–195 (ELTC…LEHL), 202–222 (SVTQ…RKMT), 234–255 (NLTL…GYLF), and 259–280 (KLNC…KHKL). A disordered region spans residues 379–412 (KHEAISSQESKKSKKRPFEESETEQNNSSQPSKQ). Ser406 and Ser407 each carry phosphoserine.

This sequence belongs to the LRRC42 family.

This chain is Leucine-rich repeat-containing protein 42 (LRRC42), found in Homo sapiens (Human).